A 228-amino-acid polypeptide reads, in one-letter code: Large ribosomal subunit protein bL25 (228 aa).

The disordered stretch occupies residues 198–228 (AAIAEAQSAEAAEEKAEAEAEATNEKNDTEE). Residues 209 to 228 (AEEKAEAEAEATNEKNDTEE) show a composition bias toward basic and acidic residues.

This sequence belongs to the bacterial ribosomal protein bL25 family. CTC subfamily. Part of the 50S ribosomal subunit; part of the 5S rRNA/L5/L18/L25 subcomplex. Contacts the 5S rRNA. Binds to the 5S rRNA independently of L5 and L18.

This is one of the proteins that binds to the 5S RNA in the ribosome where it forms part of the central protuberance. The chain is Large ribosomal subunit protein bL25 from Methylorubrum populi (strain ATCC BAA-705 / NCIMB 13946 / BJ001) (Methylobacterium populi).